A 105-amino-acid chain; its full sequence is Small ribosomal subunit protein uS10 (105 aa).

Belongs to the universal ribosomal protein uS10 family. As to quaternary structure, part of the 30S ribosomal subunit.

Involved in the binding of tRNA to the ribosomes. The sequence is that of Small ribosomal subunit protein uS10 from Bdellovibrio bacteriovorus (strain ATCC 15356 / DSM 50701 / NCIMB 9529 / HD100).